A 334-amino-acid chain; its full sequence is GTP 3',8-cyclase (334 aa).

Positions 13-239 constitute a Radical SAM core domain; sequence RFHRKFYYLR…KVKAANDGPA (227 aa). Arg-22 lines the GTP pocket. [4Fe-4S] cluster is bound by residues Cys-29 and Cys-33. Tyr-35 is an S-adenosyl-L-methionine binding site. Cys-36 provides a ligand contact to [4Fe-4S] cluster. Arg-73 provides a ligand contact to GTP. Gly-77 contributes to the S-adenosyl-L-methionine binding site. Position 104 (Thr-104) interacts with GTP. Ser-128 contributes to the S-adenosyl-L-methionine binding site. Lys-165 provides a ligand contact to GTP. Met-199 contributes to the S-adenosyl-L-methionine binding site. [4Fe-4S] cluster contacts are provided by Cys-262 and Cys-265. 267 to 269 contacts GTP; sequence RLR. Cys-279 contacts [4Fe-4S] cluster.

The protein belongs to the radical SAM superfamily. MoaA family. As to quaternary structure, monomer and homodimer. [4Fe-4S] cluster is required as a cofactor.

It catalyses the reaction GTP + AH2 + S-adenosyl-L-methionine = (8S)-3',8-cyclo-7,8-dihydroguanosine 5'-triphosphate + 5'-deoxyadenosine + L-methionine + A + H(+). It participates in cofactor biosynthesis; molybdopterin biosynthesis. Its function is as follows. Catalyzes the cyclization of GTP to (8S)-3',8-cyclo-7,8-dihydroguanosine 5'-triphosphate. This is GTP 3',8-cyclase from Vibrio vulnificus (strain YJ016).